A 673-amino-acid chain; its full sequence is Kinesin-like protein KIFC1 (673 aa).

Phosphoserine occurs at positions 6, 26, 31, and 33. Disordered stretches follow at residues 23 to 94 and 109 to 136; these read KAPS…TGPR and VPAV…KRPA. Over residues 60–86 the composition is skewed to polar residues; that stretch reads TKITTSHPRVPSLTTVPQTQGQTTAQK. Positions 142-306 form a coiled coil; the sequence is QLCDLNAELK…RRRLHNQLQE (165 aa). Residues 310–663 form the Kinesin motor domain; the sequence is NIRVFCRVRP…LRFASKVNQC (354 aa). The interval 325 to 372 is disordered; it reads PTPPPGLLLFPSGPGGPSDPPTRLSLSRSDERRGTLSGAPAPPTRHDF. T359 is modified (phosphothreonine). Residue 410–417 coordinates ATP; the sequence is GQTGSGKT.

Belongs to the TRAFAC class myosin-kinesin ATPase superfamily. Kinesin family. NCD subfamily. In terms of assembly, binds NUBP1 and NUBP2. Interacts with PPP1R42.

The protein localises to the nucleus. Its subcellular location is the cytoplasm. It is found in the cytoskeleton. It localises to the microtubule organizing center. The protein resides in the centrosome. The protein localises to the spindle. Its subcellular location is the early endosome. Minus end-directed microtubule-dependent motor required for bipolar spindle formation. May contribute to movement of early endocytic vesicles. Regulates cilium formation and structure. The protein is Kinesin-like protein KIFC1 (KIFC1) of Homo sapiens (Human).